The sequence spans 315 residues: MINNQTQEALYLDFDRARWAELRNSVPLTLSEADLTRLRGINERISLSEVTDIYLPLSRLLNLIVGARQQRGLVLNQFLGNKQPDSPYVISIAGSVAVGKSTTARILQALLKQWPEHPKVDLVTTDGFLYPLTELKRKGLLQRKGFPESYDTKMLIDFVSAVKSGAERVEVPLYSHIIYDRLPYERQVIQKPDILILEGLNVLQTGLDSPVDIRRPFVSDFVDFSIYVDADESLLKSWYIERFLQFRSSAFADENSYFRHYASLNDTQATETASQIWDGINGPNLRMNIQPTRERAHLILRKGADHLMNRVLLRK.

94–101 (GSVAVGKS) provides a ligand contact to ATP.

Belongs to the prokaryotic pantothenate kinase family.

It localises to the cytoplasm. The enzyme catalyses (R)-pantothenate + ATP = (R)-4'-phosphopantothenate + ADP + H(+). The protein operates within cofactor biosynthesis; coenzyme A biosynthesis; CoA from (R)-pantothenate: step 1/5. The polypeptide is Pantothenate kinase (Shewanella amazonensis (strain ATCC BAA-1098 / SB2B)).